The sequence spans 700 residues: Elongation factor G (700 aa).

The tr-type G domain maps to 8–290 (ERYRNIGISA…AVVEYLPAPT (283 aa)). GTP contacts are provided by residues 17–24 (AHIDAGKT), 88–92 (DTPGH), and 142–145 (NKMD).

The protein belongs to the TRAFAC class translation factor GTPase superfamily. Classic translation factor GTPase family. EF-G/EF-2 subfamily.

It is found in the cytoplasm. Catalyzes the GTP-dependent ribosomal translocation step during translation elongation. During this step, the ribosome changes from the pre-translocational (PRE) to the post-translocational (POST) state as the newly formed A-site-bound peptidyl-tRNA and P-site-bound deacylated tRNA move to the P and E sites, respectively. Catalyzes the coordinated movement of the two tRNA molecules, the mRNA and conformational changes in the ribosome. The polypeptide is Elongation factor G (Haemophilus influenzae (strain PittEE)).